A 143-amino-acid polypeptide reads, in one-letter code: Chorion class A protein Ld5 (143 aa).

The first 21 residues, 1-21 (MNSFALLLVCIQACLVQSVFS), serve as a signal peptide directing secretion.

Belongs to the chorion protein family.

This protein is one of many from the eggshell of the gypsy moth. The polypeptide is Chorion class A protein Ld5 (Lymantria dispar (Gypsy moth)).